Reading from the N-terminus, the 61-residue chain is U-stichotoxin-Hcr1b (61 aa).

Positions 1-19 (PILIFAFVMFAVMVNAKPS) are cleaved as a signal peptide. A propeptide spanning residues 20-31 (IDDAEMKREPKP) is cleaved from the precursor. 2 disulfide bridges follow: cysteine 38/cysteine 49 and cysteine 41/cysteine 56.

It belongs to the Hau1a/HC18/HC19 family.

It is found in the secreted. It localises to the nematocyst. Its function is as follows. Toxin that is lethal to crab. Does not produce the typical symptoms associated with sodium channel toxins in crabs, suggesting that it likely does not act on sodium channels. This Radianthus crispa (Leathery sea anemone) protein is U-stichotoxin-Hcr1b.